Here is a 199-residue protein sequence, read N- to C-terminus: MVLVKICGLMHSEDILAVNTAGADFAGFVFAPGRHQVSLEQALALNQLLHSKIKTVGVFVNEPVAEILAIYQAGAIDVAQLHGKSTPAEITQLQQAGLKVIQVFERQAIDLTSMADYLMVDSGKGSGQLLNLKAIPHISRPLILAGGLTPLNVRQAVQLVQPTMVDVSSGVETNGHKDADKITQFIQQAKEDIIYEDIK.

This sequence belongs to the TrpF family.

The catalysed reaction is N-(5-phospho-beta-D-ribosyl)anthranilate = 1-(2-carboxyphenylamino)-1-deoxy-D-ribulose 5-phosphate. It participates in amino-acid biosynthesis; L-tryptophan biosynthesis; L-tryptophan from chorismate: step 3/5. The protein is N-(5'-phosphoribosyl)anthranilate isomerase (trpF) of Lacticaseibacillus casei (Lactobacillus casei).